We begin with the raw amino-acid sequence, 250 residues long: Transcriptional activator protein EchR (250 aa).

The HTH luxR-type domain maps to 173–238 (KSQEPNIFSQ…HAIRLGVEMN (66 aa)). The segment at residues 197-216 (YQEIALILGITTSTVKFHIG) is a DNA-binding region (H-T-H motif).

Belongs to the autoinducer-regulated transcriptional regulatory protein family.

Its function is as follows. Functions as a potential ohlL-responsive transcriptional regulator. In Dickeya chrysanthemi (Pectobacterium chrysanthemi), this protein is Transcriptional activator protein EchR (echR).